The following is a 491-amino-acid chain: Ketol-acid reductoisomerase (NADP(+)) (491 aa).

In terms of domain architecture, KARI N-terminal Rossmann spans 15–208 (AQLGKCRFMG…GGHRAGVLES (194 aa)). Residues 45–48 (CGAQ), Arg-68, Arg-76, Ser-78, and 108–110 (DKQ) each bind NADP(+). His-132 is a catalytic residue. Gly-158 contacts NADP(+). KARI C-terminal knotted domains are found at residues 209–344 (SFVA…TAPQ) and 345–484 (YEGK…MTDM). Positions 217, 221, 389, and 393 each coordinate Mg(2+). Ser-414 is a substrate binding site.

The protein belongs to the ketol-acid reductoisomerase family. Mg(2+) is required as a cofactor.

The enzyme catalyses (2R)-2,3-dihydroxy-3-methylbutanoate + NADP(+) = (2S)-2-acetolactate + NADPH + H(+). It carries out the reaction (2R,3R)-2,3-dihydroxy-3-methylpentanoate + NADP(+) = (S)-2-ethyl-2-hydroxy-3-oxobutanoate + NADPH + H(+). It participates in amino-acid biosynthesis; L-isoleucine biosynthesis; L-isoleucine from 2-oxobutanoate: step 2/4. It functions in the pathway amino-acid biosynthesis; L-valine biosynthesis; L-valine from pyruvate: step 2/4. Its function is as follows. Involved in the biosynthesis of branched-chain amino acids (BCAA). Catalyzes an alkyl-migration followed by a ketol-acid reduction of (S)-2-acetolactate (S2AL) to yield (R)-2,3-dihydroxy-isovalerate. In the isomerase reaction, S2AL is rearranged via a Mg-dependent methyl migration to produce 3-hydroxy-3-methyl-2-ketobutyrate (HMKB). In the reductase reaction, this 2-ketoacid undergoes a metal-dependent reduction by NADPH to yield (R)-2,3-dihydroxy-isovalerate. The chain is Ketol-acid reductoisomerase (NADP(+)) from Escherichia coli (strain UTI89 / UPEC).